A 157-amino-acid chain; its full sequence is Transcription factor HES-2 (157 aa).

The region spanning Leu13–Gln70 is the bHLH domain. Positions Tyr86 to Leu119 constitute an Orange domain. Positions Val124–Trp157 are disordered. Pro residues predominate over residues Thr132–Gly149. Positions Trp154–Trp157 match the WRPW motif motif.

In terms of assembly, transcription repression requires formation of a complex with a corepressor protein of the Groucho/TLE family.

It localises to the nucleus. Transcriptional repressor of genes that require a bHLH protein for their transcription. This chain is Transcription factor HES-2 (Hes2), found in Mus musculus (Mouse).